Consider the following 307-residue polypeptide: Homoserine O-acetyltransferase (307 aa).

Cysteine 142 serves as the catalytic Acyl-thioester intermediate. 2 residues coordinate substrate: lysine 163 and serine 192. Residue histidine 235 is the Proton acceptor of the active site. Residue glutamate 237 is part of the active site. Residue arginine 249 participates in substrate binding.

The protein belongs to the MetA family.

Its subcellular location is the cytoplasm. It catalyses the reaction L-homoserine + acetyl-CoA = O-acetyl-L-homoserine + CoA. Its pathway is amino-acid biosynthesis; L-methionine biosynthesis via de novo pathway; O-acetyl-L-homoserine from L-homoserine: step 1/1. In terms of biological role, transfers an acetyl group from acetyl-CoA to L-homoserine, forming acetyl-L-homoserine. The sequence is that of Homoserine O-acetyltransferase from Desulfitobacterium hafniense (strain Y51).